Consider the following 291-residue polypeptide: N-acetylmannosamine kinase (291 aa).

ATP is bound by residues 5 to 12 (AIDIGGTK) and 132 to 139 (GVGGGVVC). The Zn(2+) site is built by His156, Cys166, Cys168, and Cys173.

The protein belongs to the ROK (NagC/XylR) family. NanK subfamily. In terms of assembly, homodimer.

The enzyme catalyses an N-acyl-D-mannosamine + ATP = an N-acyl-D-mannosamine 6-phosphate + ADP + H(+). The protein operates within amino-sugar metabolism; N-acetylneuraminate degradation; D-fructose 6-phosphate from N-acetylneuraminate: step 2/5. Functionally, catalyzes the phosphorylation of N-acetylmannosamine (ManNAc) to ManNAc-6-P. In Salmonella dublin (strain CT_02021853), this protein is N-acetylmannosamine kinase.